A 403-amino-acid polypeptide reads, in one-letter code: Tryptophan synthase beta chain (403 aa).

Lysine 88 is subject to N6-(pyridoxal phosphate)lysine.

It belongs to the TrpB family. In terms of assembly, tetramer of two alpha and two beta chains. The cofactor is pyridoxal 5'-phosphate.

The enzyme catalyses (1S,2R)-1-C-(indol-3-yl)glycerol 3-phosphate + L-serine = D-glyceraldehyde 3-phosphate + L-tryptophan + H2O. The protein operates within amino-acid biosynthesis; L-tryptophan biosynthesis; L-tryptophan from chorismate: step 5/5. In terms of biological role, the beta subunit is responsible for the synthesis of L-tryptophan from indole and L-serine. This is Tryptophan synthase beta chain from Shewanella frigidimarina (strain NCIMB 400).